Reading from the N-terminus, the 20-residue chain is Equinatoxin-1'' (20 aa).

The tract at residues 3-12 is plays an important role in the hemolytic activity; sequence AVAGAVIEGA. The interval 11-20 is N-terminal region; it reads GATLTFNVLQ.

The protein belongs to the actinoporin family. Sea anemone subfamily. As to quaternary structure, octamer or nonamer in membranes. Monomer in the soluble state.

Its subcellular location is the secreted. It localises to the nematocyst. The protein resides in the target cell membrane. In terms of biological role, pore-forming protein that forms cations-selective hydrophilic pores of around 1 nm and causes cardiac stimulation and cytolysis. Pore formation is a multi-step process that involves specific recognition of membrane sphingomyelin (but neither cholesterol nor phosphatidylcholine) using aromatic rich region and adjacent phosphocholine (POC) binding site, firm binding to the membrane (mainly driven by hydrophobic interactions) accompanied by the transfer of the N-terminal region to the lipid-water interface and finally pore formation after oligomerization of monomers. Cytolytic effects include red blood cells hemolysis, platelet aggregation and lysis, cytotoxic and cytostatic effects on fibroblasts. Lethality in mammals has been ascribed to severe vasospasm of coronary vessels, cardiac arrhythmia, and inotropic effects. In Actinia equina (Beadlet anemone), this protein is Equinatoxin-1''.